A 108-amino-acid polypeptide reads, in one-letter code: Anti-sigma-B factor antagonist (108 aa).

Positions 3–108 (LNIETTTQDK…MHVNEGTEVE (106 aa)) constitute an STAS domain. Serine 57 is subject to Phosphoserine.

It belongs to the anti-sigma-factor antagonist family. Post-translationally, phosphorylated by RsbW on a serine residue.

Functionally, positive regulator of sigma-B activity. Non-phosphorylated RsbV binds to RsbW, preventing its association with sigma-B. When phosphorylated, releases RsbW, which is then free to complex with and inactivate sigma-B. This is Anti-sigma-B factor antagonist (rsbV) from Staphylococcus aureus (strain NCTC 8325 / PS 47).